Here is a 564-residue protein sequence, read N- to C-terminus: Heat shock factor protein 2 (564 aa).

Residues 21 to 126 (VPAFLSKLWA…LLEHIKRKVS (106 aa)) mediate DNA binding. Positions 133 to 206 (NKISQEDLSK…VTLVQNNQLV (74 aa)) are hydrophobic repeat HR-A/B. Residues 271–280 (EENTMVDEEN) show a composition bias toward acidic residues. Disordered regions lie at residues 271 to 301 (EENT…CSRS) and 320 to 347 (QGDK…SPLM). The interval 390–415 (LLDYLDSIDCSLEDFQAMLSGRQFSI) is hydrophobic repeat HR-C. Positions 448–465 (TTKSNAGPAASQETQVSK) are enriched in polar residues. Positions 448 to 468 (TTKSNAGPAASQETQVSKPKS) are disordered.

It belongs to the HSF family. Homotrimer. As to expression, expressed in most tissues with the exceptions of blood and liver.

The protein resides in the cytoplasm. Its subcellular location is the nucleus. Functionally, DNA-binding protein that specifically binds heat shock promoter elements (HSE) and activates transcription. HSF2 shows constitutive DNA binding activity, even without heat shock. The polypeptide is Heat shock factor protein 2 (HSF2) (Gallus gallus (Chicken)).